Here is a 787-residue protein sequence, read N- to C-terminus: Endonuclease MutS2 (787 aa).

Residue 334–341 (GPNTGGKT) coordinates ATP. Residues 712-787 (LDLRGKRYEE…GNGATIVTFK (76 aa)) enclose the Smr domain.

Belongs to the DNA mismatch repair MutS family. MutS2 subfamily. As to quaternary structure, homodimer. Binds to stalled ribosomes, contacting rRNA.

Its function is as follows. Endonuclease that is involved in the suppression of homologous recombination and thus may have a key role in the control of bacterial genetic diversity. Functionally, acts as a ribosome collision sensor, splitting the ribosome into its 2 subunits. Detects stalled/collided 70S ribosomes which it binds and splits by an ATP-hydrolysis driven conformational change. Acts upstream of the ribosome quality control system (RQC), a ribosome-associated complex that mediates the extraction of incompletely synthesized nascent chains from stalled ribosomes and their subsequent degradation. Probably generates substrates for RQC. This chain is Endonuclease MutS2, found in Latilactobacillus sakei subsp. sakei (strain 23K) (Lactobacillus sakei subsp. sakei).